Here is a 155-residue protein sequence, read N- to C-terminus: MLKQVEIFTDGSCLGNPGPGGYGAILRYKQTEKTFSAGFRLTTNNRMEMMAAIVALEALTTPCEVTLSTDSQYVRQGITTWIHNWKKRGWKTADKKPVKNVDLWQRLDLAIQRHTVKWEWVKGHAGHPENERCDVLARDAASNPTQDDVGYKPES.

The 142-residue stretch at 1–142 folds into the RNase H type-1 domain; sequence MLKQVEIFTD…CDVLARDAAS (142 aa). Residues aspartate 10, glutamate 48, aspartate 70, and aspartate 134 each contribute to the Mg(2+) site.

It belongs to the RNase H family. Monomer. It depends on Mg(2+) as a cofactor.

The protein localises to the cytoplasm. It catalyses the reaction Endonucleolytic cleavage to 5'-phosphomonoester.. Endonuclease that specifically degrades the RNA of RNA-DNA hybrids. This Serratia proteamaculans (strain 568) protein is Ribonuclease H.